A 159-amino-acid polypeptide reads, in one-letter code: UPF0225 protein plu2503 (159 aa).

The protein belongs to the UPF0225 family.

In Photorhabdus laumondii subsp. laumondii (strain DSM 15139 / CIP 105565 / TT01) (Photorhabdus luminescens subsp. laumondii), this protein is UPF0225 protein plu2503.